A 319-amino-acid chain; its full sequence is tRNA-modifying protein YgfZ (319 aa).

Residues Trp27 and Trp189 each coordinate folate.

It belongs to the tRNA-modifying YgfZ family.

Its subcellular location is the cytoplasm. Functionally, folate-binding protein involved in regulating the level of ATP-DnaA and in the modification of some tRNAs. It is probably a key factor in regulatory networks that act via tRNA modification, such as initiation of chromosomal replication. The chain is tRNA-modifying protein YgfZ from Buchnera aphidicola subsp. Acyrthosiphon pisum (strain APS) (Acyrthosiphon pisum symbiotic bacterium).